A 219-amino-acid chain; its full sequence is Abasic site processing protein YobE (219 aa).

Catalysis depends on cysteine 2, which acts as the Nucleophile. Cysteine 2 carries the post-translational modification Thiazolidine linkage to a ring-opened DNA abasic site. The active site involves glutamate 106.

Belongs to the SOS response-associated peptidase family.

Its activity is regulated as follows. Formation and reversal of DNA-protein cross-link depends on DNA context. Catalyzes formation of the thiazolidine linkage in presence of abasic sites in single-stranded DNA. Mediates the reversal of the thiazolidine cross-link in presence of double stranded DNA. In terms of biological role, sensor of abasic sites in single-stranded DNA (ssDNA) required to preserve genome integrity by promoting error-free repair of abasic sites. Recognizes and binds abasic sites in ssDNA at replication forks and chemically modifies the lesion by forming a covalent cross-link with DNA: forms a stable thiazolidine linkage between a ring-opened abasic site and the alpha-amino and sulfhydryl substituents of its N-terminal catalytic cysteine residue. The DNA-protein cross-link is then reversed: able to catalyze the reversal of the thiazolidine cross-link and cycle between a cross-link and a non-cross-linked state depending on DNA context: mediates self-reversal of the thiazolidine cross-link in double stranded DNA. May act as a protease: mediates autocatalytic processing of its N-terminal methionine in order to expose the catalytic cysteine. This is Abasic site processing protein YobE (yobE) from Bacillus subtilis (strain 168).